We begin with the raw amino-acid sequence, 257 residues long: Glutamate racemase (257 aa).

Substrate is bound by residues 12 to 13 (DS) and 44 to 45 (YG). Catalysis depends on cysteine 75, which acts as the Proton donor/acceptor. 76–77 (NT) serves as a coordination point for substrate. Cysteine 176 functions as the Proton donor/acceptor in the catalytic mechanism. 177–178 (TH) contacts substrate.

Belongs to the aspartate/glutamate racemases family.

It catalyses the reaction L-glutamate = D-glutamate. Its pathway is cell wall biogenesis; peptidoglycan biosynthesis. Its function is as follows. Provides the (R)-glutamate required for cell wall biosynthesis. The polypeptide is Glutamate racemase (Thermus thermophilus (strain ATCC 27634 / DSM 579 / HB8)).